The chain runs to 422 residues: Glutamyl-tRNA reductase (422 aa).

Residues 48-51 (TCNR), serine 100, 105-107 (EDQ), and glutamine 111 each bind substrate. The active-site Nucleophile is cysteine 49. 180-185 (GTGEMG) is an NADP(+) binding site.

It belongs to the glutamyl-tRNA reductase family. As to quaternary structure, homodimer.

It carries out the reaction (S)-4-amino-5-oxopentanoate + tRNA(Glu) + NADP(+) = L-glutamyl-tRNA(Glu) + NADPH + H(+). The protein operates within porphyrin-containing compound metabolism; protoporphyrin-IX biosynthesis; 5-aminolevulinate from L-glutamyl-tRNA(Glu): step 1/2. In terms of biological role, catalyzes the NADPH-dependent reduction of glutamyl-tRNA(Glu) to glutamate 1-semialdehyde (GSA). This is Glutamyl-tRNA reductase from Methanococcoides burtonii (strain DSM 6242 / NBRC 107633 / OCM 468 / ACE-M).